The following is a 445-amino-acid chain: Xylose isomerase (445 aa).

Active-site residues include His-107 and Asp-110. The Mg(2+) site is built by Glu-238, Glu-274, His-277, Asp-302, Asp-313, Asp-315, and Asp-345.

Belongs to the xylose isomerase family. In terms of assembly, homotetramer. Mg(2+) serves as cofactor.

It localises to the cytoplasm. It carries out the reaction alpha-D-xylose = alpha-D-xylulofuranose. The protein is Xylose isomerase of Bacillus pumilus (strain SAFR-032).